A 152-amino-acid polypeptide reads, in one-letter code: Small ribosomal subunit protein uS19 (152 aa).

This sequence belongs to the universal ribosomal protein uS19 family.

This Podospora anserina (Pleurage anserina) protein is Small ribosomal subunit protein uS19 (RPS15).